An 86-amino-acid chain; its full sequence is Small ribosomal subunit protein bS18 (86 aa).

The protein belongs to the bacterial ribosomal protein bS18 family. As to quaternary structure, part of the 30S ribosomal subunit. Forms a tight heterodimer with protein bS6.

In terms of biological role, binds as a heterodimer with protein bS6 to the central domain of the 16S rRNA, where it helps stabilize the platform of the 30S subunit. This chain is Small ribosomal subunit protein bS18, found in Campylobacter fetus subsp. fetus (strain 82-40).